We begin with the raw amino-acid sequence, 280 residues long: S-methyl-5'-thioadenosine phosphorylase (280 aa).

Phosphate is bound by residues Ser-15, 57-58 (RH), and 90-91 (TA). Met-193 is a substrate binding site. Thr-194 contributes to the phosphate binding site. Residue 217–219 (DYD) participates in substrate binding.

The protein belongs to the PNP/MTAP phosphorylase family. MTAP subfamily. In terms of assembly, homotrimer.

It is found in the cytoplasm. Its subcellular location is the nucleus. It carries out the reaction S-methyl-5'-thioadenosine + phosphate = 5-(methylsulfanyl)-alpha-D-ribose 1-phosphate + adenine. The protein operates within amino-acid biosynthesis; L-methionine biosynthesis via salvage pathway; S-methyl-5-thio-alpha-D-ribose 1-phosphate from S-methyl-5'-thioadenosine (phosphorylase route): step 1/1. Functionally, catalyzes the reversible phosphorylation of S-methyl-5'-thioadenosine (MTA) to adenine and 5-methylthioribose-1-phosphate. Involved in the breakdown of MTA, a major by-product of polyamine biosynthesis. Responsible for the first step in the methionine salvage pathway after MTA has been generated from S-adenosylmethionine. Has broad substrate specificity with 6-aminopurine nucleosides as preferred substrates. The chain is S-methyl-5'-thioadenosine phosphorylase (mtap) from Danio rerio (Zebrafish).